The following is a 505-amino-acid chain: Phase 1 flagellin (505 aa).

This sequence belongs to the bacterial flagellin family.

It is found in the secreted. The protein resides in the bacterial flagellum. In terms of biological role, flagellin is the subunit protein which polymerizes to form the filaments of bacterial flagella. The sequence is that of Phase 1 flagellin (fliC) from Salmonella naestved.